Here is a 201-residue protein sequence, read N- to C-terminus: MTLSPLLLPLQLLLLLLFSGAVCRAEAGPETESPVRTLQVETLVQPPESCTESAAIGDTLHIHYTGSLVDGRIIDTSLTRDPLVIELGQKQVIPGLEQSLLDMCVGEKRRAVIPSHLAYGKRGYPPSIPADAVVQYDVELIALIRANYWQKLLKSILPLVGIAMVPALLGLIGYHLYRKASRPKVSKKKLKEEKRNKSKKK.

An N-terminal signal peptide occupies residues 1–27 (MTLSPLLLPLQLLLLLLFSGAVCRAEA). The PPIase FKBP-type domain occupies 57–144 (GDTLHIHYTG…QYDVELIALI (88 aa)). The chain crosses the membrane as a helical span at residues 156–176 (ILPLVGIAMVPALLGLIGYHL).

It belongs to the FKBP-type PPIase family. As to quaternary structure, interacts with IFITM5.

It is found in the membrane. It catalyses the reaction [protein]-peptidylproline (omega=180) = [protein]-peptidylproline (omega=0). PPIases accelerate the folding of proteins during protein synthesis. The polypeptide is Peptidyl-prolyl cis-trans isomerase FKBP11 (Fkbp11) (Mus musculus (Mouse)).